Reading from the N-terminus, the 404-residue chain is Cytochrome b (404 aa).

Transmembrane regions (helical) follow at residues 35-55 (FGSL…FLAM), 79-101 (WLLR…LHFF), 116-136 (VWCL…IGYV), and 182-202 (FFSL…LHLA). Positions 85 and 99 each coordinate heme b. Heme b-binding residues include histidine 186 and histidine 200. Histidine 205 contributes to the a ubiquinone binding site. The next 4 helical transmembrane spans lie at 228 to 248 (IYVK…IFVF), 292 to 312 (LGGV…PFIN), 324 to 344 (IHQK…WIGC), and 351 to 370 (YVTI…AITP).

This sequence belongs to the cytochrome b family. In terms of assembly, the main subunits of complex b-c1 are: cytochrome b, cytochrome c1 and the Rieske protein. The cofactor is heme b.

The protein resides in the mitochondrion inner membrane. Its function is as follows. Component of the ubiquinol-cytochrome c reductase complex (complex III or cytochrome b-c1 complex) that is part of the mitochondrial respiratory chain. The b-c1 complex mediates electron transfer from ubiquinol to cytochrome c. Contributes to the generation of a proton gradient across the mitochondrial membrane that is then used for ATP synthesis. The chain is Cytochrome b (MT-CYB) from Marchantia polymorpha (Common liverwort).